The sequence spans 458 residues: Histone acetyltransferase Tip60 homolog (458 aa).

The disordered stretch occupies residues 1-24; it reads MTEPKKEIIEDENHGISKKIPTDP. Positions 30-86 constitute a Tudor-knot domain; it reads VTEGCRLLVMMASQEEERWAEVISRCRAANGSIKFYVHYIDCNRRLDEWVQSDRLNL. The tract at residues 94 to 123 is disordered; the sequence is KGGKKGAHLREENRDSNENEGKKSGRKRKI. A compositionally biased stretch (basic and acidic residues) spans 101–116; that stretch reads HLREENRDSNENEGKK. The 279-residue stretch at 168–446 folds into the MYST-type HAT domain; it reads TRIRNVECIE…INPAALQWRP (279 aa). Residues 201–226 form a C2HC MYST-type zinc finger; sequence IYICEFCLKYLKSKTCLKRHMEKCAM. At Lys268 the chain carries N6-acetyllysine; by autocatalysis. Acetyl-CoA contacts are provided by residues 311–313 and 318–324; these read ILV and QKKGYGS. Residue Glu344 is the Proton donor/acceptor of the active site. Acetyl-CoA contacts are provided by Ser348 and Ser357.

The protein belongs to the MYST (SAS/MOZ) family. In terms of assembly, interacts with transcription-associated protein trr-1. Probably a component of a complex with histone acetyltransferase (HAT) activity, at least composed of mys-1 and trr-1. In terms of processing, autoacetylation at Lys-268 is required for binding histones with high affinity and for proper function.

It localises to the nucleus. The catalysed reaction is L-lysyl-[protein] + acetyl-CoA = N(6)-acetyl-L-lysyl-[protein] + CoA + H(+). Functionally, probable catalytic subunit of the Tip60 chromatin-remodeling complex. Plays a role in acetylation of nucleosomal histone H4 and perhaps also H2A, probably acting as a component of the Tip60 histone acetyltransferase complex. Acts in the determination of vulval and distal tip cell (DTC) precursor cell fates. Involved in the positive regulation of transcription factor daf-16, probably acting by histone acetylation; thereby modulating stress resistance. The polypeptide is Histone acetyltransferase Tip60 homolog (Caenorhabditis elegans).